The sequence spans 257 residues: NAD-capped RNA hydrolase NudC (257 aa).

Substrate-binding residues include Lys25 and Arg69. The Zn(2+) site is built by Cys98 and Cys101. Residue Glu111 coordinates substrate. Zn(2+)-binding residues include Cys116 and Cys119. Tyr124 is a substrate binding site. One can recognise a Nudix hydrolase domain in the interval 125-248 (PQIAPCIIVA…TVARRLIEDT (124 aa)). Residues Ala158, Glu174, and Glu178 each coordinate a divalent metal cation. The Nudix box signature appears at 159–180 (GFVEVGETLEQAVAREVMEESG). 192 to 199 (QPWPFPQS) serves as a coordination point for substrate. Glu219 provides a ligand contact to a divalent metal cation. Ala241 lines the substrate pocket.

Belongs to the Nudix hydrolase family. NudC subfamily. Homodimer. Requires Mg(2+) as cofactor. Mn(2+) serves as cofactor. The cofactor is Zn(2+).

The catalysed reaction is a 5'-end NAD(+)-phospho-ribonucleoside in mRNA + H2O = a 5'-end phospho-adenosine-phospho-ribonucleoside in mRNA + beta-nicotinamide D-ribonucleotide + 2 H(+). It catalyses the reaction NAD(+) + H2O = beta-nicotinamide D-ribonucleotide + AMP + 2 H(+). The enzyme catalyses NADH + H2O = reduced beta-nicotinamide D-ribonucleotide + AMP + 2 H(+). In terms of biological role, mRNA decapping enzyme that specifically removes the nicotinamide adenine dinucleotide (NAD) cap from a subset of mRNAs by hydrolyzing the diphosphate linkage to produce nicotinamide mononucleotide (NMN) and 5' monophosphate mRNA. The NAD-cap is present at the 5'-end of some mRNAs and stabilizes RNA against 5'-processing. Has preference for mRNAs with a 5'-end purine. Catalyzes the hydrolysis of a broad range of dinucleotide pyrophosphates. This is NAD-capped RNA hydrolase NudC from Escherichia coli (strain 55989 / EAEC).